The sequence spans 477 residues: AAA-ATPase At3g28600 (477 aa).

A signal peptide spans 1–26 (MMMGNTFGSSLASLFFLWATIQQIFP). 245–252 (GPPGTGKS) contributes to the ATP binding site.

It belongs to the AAA ATPase family. BCS1 subfamily. Mg(2+) serves as cofactor.

It catalyses the reaction ATP + H2O = ADP + phosphate + H(+). The chain is AAA-ATPase At3g28600 from Arabidopsis thaliana (Mouse-ear cress).